We begin with the raw amino-acid sequence, 340 residues long: Phosphoribosylformylglycinamidine cyclo-ligase (340 aa).

It belongs to the AIR synthase family.

The protein localises to the cytoplasm. It catalyses the reaction 2-formamido-N(1)-(5-O-phospho-beta-D-ribosyl)acetamidine + ATP = 5-amino-1-(5-phospho-beta-D-ribosyl)imidazole + ADP + phosphate + H(+). It participates in purine metabolism; IMP biosynthesis via de novo pathway; 5-amino-1-(5-phospho-D-ribosyl)imidazole from N(2)-formyl-N(1)-(5-phospho-D-ribosyl)glycinamide: step 2/2. The protein is Phosphoribosylformylglycinamidine cyclo-ligase of Crocosphaera subtropica (strain ATCC 51142 / BH68) (Cyanothece sp. (strain ATCC 51142)).